Consider the following 215-residue polypeptide: Glutathione S-transferase D2 (215 aa).

Residues 1–80 (MDFYYMPGGG…YLVEKYGKDD (80 aa)) enclose the GST N-terminal domain. Residues 50 to 52 (HTI) and 64 to 66 (ESR) contribute to the glutathione site. Positions 86-212 (DPKKRAVINQ…MKALFDARKL (127 aa)) constitute a GST C-terminal domain.

Belongs to the GST superfamily. Delta family. In terms of assembly, homodimer.

The enzyme catalyses RX + glutathione = an S-substituted glutathione + a halide anion + H(+). Its function is as follows. Conjugation of reduced glutathione to a wide number of exogenous and endogenous hydrophobic electrophiles. May be involved in detoxification. This Drosophila melanogaster (Fruit fly) protein is Glutathione S-transferase D2.